Reading from the N-terminus, the 117-residue chain is MANPQRAGRLAQEVQRDVTDLLLKRINDPRVKEVTVTSVELSGDLQIATIYYSILSDLASDAKKTQAGLEAASGLIRKELGSRLTVYKTPELKFVRDTSVQYGNHIEDLIRKLHTEN.

This sequence belongs to the RbfA family. As to quaternary structure, monomer. Binds 30S ribosomal subunits, but not 50S ribosomal subunits or 70S ribosomes.

The protein resides in the cytoplasm. In terms of biological role, one of several proteins that assist in the late maturation steps of the functional core of the 30S ribosomal subunit. Associates with free 30S ribosomal subunits (but not with 30S subunits that are part of 70S ribosomes or polysomes). Required for efficient processing of 16S rRNA. May interact with the 5'-terminal helix region of 16S rRNA. This chain is Ribosome-binding factor A, found in Leuconostoc mesenteroides subsp. mesenteroides (strain ATCC 8293 / DSM 20343 / BCRC 11652 / CCM 1803 / JCM 6124 / NCDO 523 / NBRC 100496 / NCIMB 8023 / NCTC 12954 / NRRL B-1118 / 37Y).